The following is a 352-amino-acid chain: A-type ATP synthase subunit C (352 aa).

This sequence belongs to the V-ATPase V0D/AC39 subunit family. Has multiple subunits with at least A(3), B(3), C, D, E, F, H, I and proteolipid K(x).

It localises to the cell membrane. Its function is as follows. Component of the A-type ATP synthase that produces ATP from ADP in the presence of a proton gradient across the membrane. In Halobacterium salinarum (strain ATCC 29341 / DSM 671 / R1), this protein is A-type ATP synthase subunit C.